Reading from the N-terminus, the 115-residue chain is uncharacterized protein (115 aa).

Positions 1 to 115 (MGVEISLDPP…ETVIKLSAAE (115 aa)) constitute an MSP domain.

This is an uncharacterized protein from Caenorhabditis elegans.